Reading from the N-terminus, the 157-residue chain is Transcription elongation factor GreB (157 aa).

The stretch at 52 to 73 (KKLLREIDRRVRYLRKRLEDMR) forms a coiled coil.

The protein belongs to the GreA/GreB family. GreB subfamily.

Necessary for efficient RNA polymerase transcription elongation past template-encoded arresting sites. The arresting sites in DNA have the property of trapping a certain fraction of elongating RNA polymerases that pass through, resulting in locked ternary complexes. Cleavage of the nascent transcript by cleavage factors such as GreA or GreB allows the resumption of elongation from the new 3'terminus. GreB releases sequences of up to 9 nucleotides in length. The chain is Transcription elongation factor GreB from Pseudomonas syringae pv. tomato (strain ATCC BAA-871 / DC3000).